Reading from the N-terminus, the 182-residue chain is Tropomyosin-like protein (182 aa).

Positions 1–68 (FDRYNQILDE…ELEQRRTEQQ (68 aa)) form a coiled coil. Basic and acidic residues predominate over residues 32 to 66 (DEETKKIKQEEAEMKKKIEGEASRKKLELEQRRTE). Disordered stretches follow at residues 32 to 81 (DEET…GSTD) and 140 to 160 (DQPA…DAGL). Positions 140–153 (DQPAQAGPEPAAPA) are enriched in low complexity.

The protein resides in the cytoplasm. The protein localises to the cytoskeleton. The chain is Tropomyosin-like protein from Pichia angusta (Yeast).